Consider the following 559-residue polypeptide: Polypeptide N-acetylgalactosaminyltransferase 1 (559 aa).

At 1 to 8 the chain is on the cytoplasmic side; that stretch reads MRKFAYCK. Residues 9–28 form a helical; Signal-anchor for type II membrane protein membrane-spanning segment; the sequence is VVLATSLIWVLLDMFLLLYF. The Lumenal segment spans residues 29–559; it reads SECNKCDEKK…LRNVTLPEIF (531 aa). A disordered region spans residues 45-65; the sequence is GDVLEPVQKPHEGPGEMGKPV. Asn95 is a glycosylation site (N-linked (GlcNAc...) asparagine). Disulfide bonds link Cys106/Cys339, Cys330/Cys408, Cys442/Cys459, Cys482/Cys497, and Cys523/Cys540. Residues 115 to 225 form a catalytic subdomain A region; the sequence is LPTTSVVIVF…VGWLEPLLAR (111 aa). Residues Asp156 and Arg186 each coordinate substrate. Asp209 and His211 together coordinate Mn(2+). The interval 285-347 is catalytic subdomain B; sequence PVRTPTMAGG…TCSHVGHVFR (63 aa). Position 316 (Trp316) interacts with substrate. Mn(2+) is bound at residue His344. Arg347 and Tyr352 together coordinate substrate. The region spanning 429–551 is the Ricin B-type lectin domain; sequence FSLGEIRNVE…GSRSQQWLLR (123 aa). The N-linked (GlcNAc...) asparagine glycan is linked to Asn552.

Belongs to the glycosyltransferase 2 family. GalNAc-T subfamily. Mn(2+) serves as cofactor. In terms of tissue distribution, widely expressed. Expressed in all tissues tested.

The protein localises to the golgi apparatus. The protein resides in the golgi stack membrane. It localises to the secreted. The catalysed reaction is L-seryl-[protein] + UDP-N-acetyl-alpha-D-galactosamine = a 3-O-[N-acetyl-alpha-D-galactosaminyl]-L-seryl-[protein] + UDP + H(+). The enzyme catalyses L-threonyl-[protein] + UDP-N-acetyl-alpha-D-galactosamine = a 3-O-[N-acetyl-alpha-D-galactosaminyl]-L-threonyl-[protein] + UDP + H(+). The protein operates within protein modification; protein glycosylation. In terms of biological role, catalyzes the initial reaction in O-linked oligosaccharide biosynthesis, the transfer of an N-acetyl-D-galactosamine residue to a serine or threonine residue on the protein receptor. Has a broad spectrum of substrates such as apomucin-, MUC5AC-, MUC1- and MUC2-derived peptides. The protein is Polypeptide N-acetylgalactosaminyltransferase 1 of Homo sapiens (Human).